The chain runs to 382 residues: Trophoblast glycoprotein-like (382 aa).

Positions 1–26 (MAPRAGQPGLQGLLLVAAALSQPAAP) are cleaved as a signal peptide. Disulfide bonds link Cys-27–Cys-33 and Cys-31–Cys-43. Over 27 to 307 (CPFQCYCFGG…EAAGPELEAS (281 aa)) the chain is Extracellular. LRR repeat units lie at residues 57 to 80 (PPDA…AFAG), 93 to 116 (LPLL…AFDG), 117 to 140 (LPSL…AFRG), 171 to 194 (LAEL…ALRL), and 196 to 217 (RLEQ…ELRA). An N-linked (GlcNAc...) asparagine glycan is attached at Asn-62. Intrachain disulfides connect Cys-238–Cys-264 and Cys-240–Cys-285. Residues 308–328 (YVFFGLVLALIGLIFLMVLYL) traverse the membrane as a helical segment. The Cytoplasmic portion of the chain corresponds to 329-382 (NRRGIQRWMRNLREACRDQMEGYHYRYEQDADPRRAPAPAAPAGSRATSPGSGL). Residues 358–382 (DADPRRAPAPAAPAGSRATSPGSGL) form a disordered region. Positions 365–382 (PAPAAPAGSRATSPGSGL) are enriched in low complexity.

The protein resides in the membrane. In Homo sapiens (Human), this protein is Trophoblast glycoprotein-like (TPBGL).